A 305-amino-acid polypeptide reads, in one-letter code: LPYIALILVCWSVLSQAAQTDVEERADKRRPIWIMGHMVNAIAQIDEFVNLGANSIETDVSFDDNANPEYTYHGIPCDCGRSCLKWENFNDFLKGLRSATTPGNAKYQAKLILVVFDLKTGSLYDNQANEAGKKLAKNLLKHYWNNGNNGGRAYIVLSIPDLNHYPLIKGFKDQLTQDGHPELMDKVGHDFSGNDAIGDVGNAYKKAGISGHVWQSDGITNCLLRGLDRVKQAIANRDSAKGFINKVYYWTVDKRATTRDALDAGVDGVMTNYPDVITDVLNESAYKNKFRVASYEDNPWETFKK.

Residues 1-17 (LPYIALILVCWSVLSQA) form the signal peptide. Residues 18–25 (AQTDVEER) constitute a propeptide that is removed on maturation. Residue His-37 is part of the active site. Residues Glu-57 and Asp-59 each contribute to the Mg(2+) site. His-73 serves as the catalytic Nucleophile. Disulfide bonds link Cys-77–Cys-83 and Cys-79–Cys-222. Asp-117 serves as a coordination point for Mg(2+). N-linked (GlcNAc...) asparagine glycosylation occurs at Asn-282.

It belongs to the arthropod phospholipase D family. Class II subfamily. The cofactor is Mg(2+). In terms of tissue distribution, expressed by the venom gland.

The protein localises to the secreted. The enzyme catalyses an N-(acyl)-sphingosylphosphocholine = an N-(acyl)-sphingosyl-1,3-cyclic phosphate + choline. The catalysed reaction is an N-(acyl)-sphingosylphosphoethanolamine = an N-(acyl)-sphingosyl-1,3-cyclic phosphate + ethanolamine. It carries out the reaction a 1-acyl-sn-glycero-3-phosphocholine = a 1-acyl-sn-glycero-2,3-cyclic phosphate + choline. It catalyses the reaction a 1-acyl-sn-glycero-3-phosphoethanolamine = a 1-acyl-sn-glycero-2,3-cyclic phosphate + ethanolamine. Dermonecrotic toxins cleave the phosphodiester linkage between the phosphate and headgroup of certain phospholipids (sphingolipid and lysolipid substrates), forming an alcohol (often choline) and a cyclic phosphate. This toxin acts on sphingomyelin (SM). It may also act on ceramide phosphoethanolamine (CPE), lysophosphatidylcholine (LPC) and lysophosphatidylethanolamine (LPE), but not on lysophosphatidylserine (LPS), and lysophosphatidylglycerol (LPG). It acts by transphosphatidylation, releasing exclusively cyclic phosphate products as second products. Induces dermonecrosis, hemolysis, increased vascular permeability, edema, inflammatory response, and platelet aggregation. This Loxosceles intermedia (Brown spider) protein is Dermonecrotic toxin LiSicTox-alphaIA2aiii.